Consider the following 251-residue polypeptide: Zinc import ATP-binding protein ZnuC (251 aa).

One can recognise an ABC transporter domain in the interval 5–220 (VSLENVSVSF…PEFISMFGPR (216 aa)). 37–44 (GPNGAGKS) lines the ATP pocket.

Belongs to the ABC transporter superfamily. Zinc importer (TC 3.A.1.15.5) family. In terms of assembly, the complex is composed of two ATP-binding proteins (ZnuC), two transmembrane proteins (ZnuB) and a solute-binding protein (ZnuA).

The protein resides in the cell inner membrane. It carries out the reaction Zn(2+)(out) + ATP(in) + H2O(in) = Zn(2+)(in) + ADP(in) + phosphate(in) + H(+)(in). In terms of biological role, part of the ABC transporter complex ZnuABC involved in zinc import. Responsible for energy coupling to the transport system. Seems to be important for the virulence. The protein is Zinc import ATP-binding protein ZnuC of Salmonella typhimurium (strain LT2 / SGSC1412 / ATCC 700720).